A 166-amino-acid chain; its full sequence is Large ribosomal subunit protein bL9 (166 aa).

This sequence belongs to the bacterial ribosomal protein bL9 family.

Functionally, binds to the 23S rRNA. The sequence is that of Large ribosomal subunit protein bL9 from Brachyspira hyodysenteriae (strain ATCC 49526 / WA1).